We begin with the raw amino-acid sequence, 525 residues long: Glutamyl-tRNA(Gln) amidotransferase subunit A, mitochondrial (525 aa).

Catalysis depends on charge relay system residues K76 and S168. S192 acts as the Acyl-ester intermediate in catalysis.

Belongs to the amidase family. GatA subfamily. Subunit of the heterotrimeric GatCAB amidotransferase (AdT) complex, composed of A (QRSL1), B (GATB) and C (GATC) subunits.

It localises to the mitochondrion. It carries out the reaction L-glutamyl-tRNA(Gln) + L-glutamine + ATP + H2O = L-glutaminyl-tRNA(Gln) + L-glutamate + ADP + phosphate + H(+). Allows the formation of correctly charged Gln-tRNA(Gln) through the transamidation of misacylated Glu-tRNA(Gln) in the mitochondria. The reaction takes place in the presence of glutamine and ATP through an activated gamma-phospho-Glu-tRNA(Gln). In Mus musculus (Mouse), this protein is Glutamyl-tRNA(Gln) amidotransferase subunit A, mitochondrial (Qrsl1).